Reading from the N-terminus, the 217-residue chain is Probable GTP-binding protein EngB (217 aa).

An EngB-type G domain is found at 29–213; sequence GPPEVAFAGR…RQAIAETVGI (185 aa). GTP-binding positions include 37 to 44, 64 to 68, 91 to 94, 158 to 161, and 192 to 194; these read GRSNVGKS, GRTQE, DMPG, TKTD, and TSS. 2 residues coordinate Mg(2+): Ser-44 and Thr-66.

Belongs to the TRAFAC class TrmE-Era-EngA-EngB-Septin-like GTPase superfamily. EngB GTPase family. Mg(2+) serves as cofactor.

Functionally, necessary for normal cell division and for the maintenance of normal septation. This is Probable GTP-binding protein EngB from Rhizobium etli (strain ATCC 51251 / DSM 11541 / JCM 21823 / NBRC 15573 / CFN 42).